The sequence spans 396 residues: NADH-quinone oxidoreductase subunit D (396 aa).

The protein belongs to the complex I 49 kDa subunit family. In terms of assembly, NDH-1 is composed of 14 different subunits. Subunits NuoB, C, D, E, F, and G constitute the peripheral sector of the complex.

The protein localises to the cell inner membrane. It catalyses the reaction a quinone + NADH + 5 H(+)(in) = a quinol + NAD(+) + 4 H(+)(out). Functionally, NDH-1 shuttles electrons from NADH, via FMN and iron-sulfur (Fe-S) centers, to quinones in the respiratory chain. The immediate electron acceptor for the enzyme in this species is believed to be ubiquinone. Couples the redox reaction to proton translocation (for every two electrons transferred, four hydrogen ions are translocated across the cytoplasmic membrane), and thus conserves the redox energy in a proton gradient. This is NADH-quinone oxidoreductase subunit D from Brucella abortus (strain S19).